A 1522-amino-acid polypeptide reads, in one-letter code: Myosin-15 (1522 aa).

The 50-residue stretch at 12–61 (RKGDKVWVEDKDLAWIAADVLDSFDNKLHVETSTGKKVFVSPEKLFRRDP) folds into the Myosin N-terminal SH3-like domain. A Myosin motor domain is found at 67 to 737 (NGVDDMTKLT…QIGILDSRRA (671 aa)). ATP contacts are provided by residues 161–168 (GESGAGKT) and 214–222 (NDNSSRFGK). 4 actin-binding regions span residues 499-533 (LIEK…FQNF), 535-558 (FHPR…AGKV), 593-618 (FPSA…KQQL), and 618-640 (LQAL…KPNS). 5 consecutive IQ domains span residues 763-792 (ARAS…AAAA), 788-817 (NAAA…AAIV), 811-840 (LVSA…HRAA), 836-865 (EHRA…SIIA), and 859-888 (RQSS…VANE). Residues 889-1059 (AGALRLAKTK…NQVLMQKTLI (171 aa)) adopt a coiled-coil conformation. In terms of domain architecture, Dilute spans 1164–1456 (NIIIEGINEA…VSQMRVLVDK (293 aa)).

It belongs to the TRAFAC class myosin-kinesin ATPase superfamily. Myosin family. Plant myosin class XI subfamily. Homodimer. Interacts with MYOB1 and MYOB7. Interacts with WIT1 and WIT2. Core component of the LINC complex which is composed of inner nuclear membrane SUN domain-containing proteins coupled to outer nuclear membrane WIP and WIT proteins. The LINC complex also involves nucleoskeletal proteins CRWN/LINC and possibly KAKU4 and the cytoskeletal myosin KAKU1.

It is found in the cytoplasm. Its subcellular location is the nucleus membrane. Myosin heavy chain that is required for the cell cycle-regulated transport of various organelles and proteins for their segregation. Functions by binding with its tail domain to receptor proteins on organelles and exerting force with its N-terminal motor domain against actin filaments, thereby transporting its cargo along polarized actin cables. Involved in trafficking of Golgi stacks and mitochondria. Plays a role in nuclear shape determination. Drives nuclear movement along actin filaments. As component of the SUN-WIP-WIT2-KAKU1 complex, mediates the transfer of cytoplasmic forces to the nuclear envelope (NE), leading to nuclear shape changes. The protein is Myosin-15 (XI-I) of Arabidopsis thaliana (Mouse-ear cress).